A 330-amino-acid polypeptide reads, in one-letter code: Aspartate--ammonia ligase (330 aa).

The protein belongs to the class-II aminoacyl-tRNA synthetase family. AsnA subfamily.

It is found in the cytoplasm. It carries out the reaction L-aspartate + NH4(+) + ATP = L-asparagine + AMP + diphosphate + H(+). Its pathway is amino-acid biosynthesis; L-asparagine biosynthesis; L-asparagine from L-aspartate (ammonia route): step 1/1. This chain is Aspartate--ammonia ligase, found in Enterobacter sp. (strain 638).